The chain runs to 285 residues: Methylamine utilization protein MauF (285 aa).

The next 7 helical transmembrane spans lie at 39 to 59, 60 to 80, 119 to 139, 145 to 165, 188 to 208, 212 to 232, and 265 to 285; these read FIMM…MHST, MSVE…GGLL, YAIG…LLFA, YAVI…FGFL, VIGL…VQTP, IVTG…VIAV, and VEVD…LVML.

It localises to the cell membrane. It functions in the pathway one-carbon metabolism; methylamine degradation. This is Methylamine utilization protein MauF (mauF) from Methylophilus methylotrophus (Bacterium W3A1).